Reading from the N-terminus, the 107-residue chain is MASGAARWLALVRVGSGASRSWLSLRKGGDVSAGRSCSGQSLVPTRSVIVTRSGAILPKPVKMSFGLLRVFSIVIPFLYVGTLISKNFAALLEEHDIFVPEDDDDDD.

The N-terminal 47 residues, 1 to 47 (MASGAARWLALVRVGSGASRSWLSLRKGGDVSAGRSCSGQSLVPTRS), are a transit peptide targeting the mitochondrion. Residues 48-65 (VIVTRSGAILPKPVKMSF) lie on the Mitochondrial matrix side of the membrane. Residues 66 to 85 (GLLRVFSIVIPFLYVGTLIS) form a helical membrane-spanning segment. A GXXXX[G/A/S] motif is present at residues 81-85 (GTLIS). Residues 86 to 107 (KNFAALLEEHDIFVPEDDDDDD) are Mitochondrial intermembrane-facing.

It belongs to the SMDT1/EMRE family. Component of the uniplex complex, composed of MCU, EMRE/SMDT1, MICU1 and MICU2 (or MICU3) in a 4:4:1:1 stoichiometry. The number of EMRE/SMDT1 molecules is hovewer variable, ranging from 1 to 4 copies per uniplex complex, leading to uniplex complexes with distinct gatekeeping profiles. Interacts (via its C-terminal poly-Asp tail) with MCUR1; the interaction is direct. Unprocessed form interacts (via transit peptide) with MAIP1. Post-translationally, undergoes proteolytic degradation in neurons: degraded by AFG3L2 and SPG7 before SMDT1/EMRE assembly with the uniporter complex, limiting the availability of SMDT1/EMRE for MCU assembly and promoting efficient assembly of gatekeeper subunits with MCU.

Its subcellular location is the mitochondrion inner membrane. In terms of biological role, essential regulatory subunit of the mitochondrial calcium uniporter complex (uniplex), a complex that mediates calcium uptake into mitochondria. Required to bridge the calcium-sensing proteins MICU1 with the calcium-conducting subunit MCU. Acts by mediating activation of MCU and retention of MICU1 to the MCU pore, in order to ensure tight regulation of the uniplex complex and appropriate responses to intracellular calcium signaling. In Bos taurus (Bovine), this protein is Essential MCU regulator, mitochondrial.